The sequence spans 417 residues: UDP-N-acetylglucosamine 1-carboxyvinyltransferase 3 (417 aa).

Position 22-23 (22-23 (KN)) interacts with phosphoenolpyruvate. A UDP-N-acetyl-alpha-D-glucosamine-binding site is contributed by arginine 92. The active-site Proton donor is cysteine 116. Cysteine 116 carries the 2-(S-cysteinyl)pyruvic acid O-phosphothioketal modification. Residues 121 to 125 (RPIDQ), aspartate 304, and isoleucine 326 contribute to the UDP-N-acetyl-alpha-D-glucosamine site.

The protein belongs to the EPSP synthase family. MurA subfamily.

Its subcellular location is the cytoplasm. The enzyme catalyses phosphoenolpyruvate + UDP-N-acetyl-alpha-D-glucosamine = UDP-N-acetyl-3-O-(1-carboxyvinyl)-alpha-D-glucosamine + phosphate. It functions in the pathway cell wall biogenesis; peptidoglycan biosynthesis. Its function is as follows. Cell wall formation. Adds enolpyruvyl to UDP-N-acetylglucosamine. The polypeptide is UDP-N-acetylglucosamine 1-carboxyvinyltransferase 3 (Caldanaerobacter subterraneus subsp. tengcongensis (strain DSM 15242 / JCM 11007 / NBRC 100824 / MB4) (Thermoanaerobacter tengcongensis)).